Reading from the N-terminus, the 384-residue chain is S-adenosylmethionine synthase (384 aa).

ATP is bound at residue His-15. Asp-17 contributes to the Mg(2+) binding site. Glu-43 contacts K(+). Residues Glu-56 and Gln-99 each contribute to the L-methionine site. Positions Gln-99–Arg-109 are flexible loop. Residues Asp-164–Lys-166, Arg-230–Phe-231, Asp-239, Arg-245–Lys-246, Ala-262, and Lys-266 contribute to the ATP site. Asp-239 is a binding site for L-methionine. Lys-270 serves as a coordination point for L-methionine.

Belongs to the AdoMet synthase family. In terms of assembly, homotetramer; dimer of dimers. Mg(2+) is required as a cofactor. It depends on K(+) as a cofactor.

The protein resides in the cytoplasm. The enzyme catalyses L-methionine + ATP + H2O = S-adenosyl-L-methionine + phosphate + diphosphate. Its pathway is amino-acid biosynthesis; S-adenosyl-L-methionine biosynthesis; S-adenosyl-L-methionine from L-methionine: step 1/1. Its function is as follows. Catalyzes the formation of S-adenosylmethionine (AdoMet) from methionine and ATP. The overall synthetic reaction is composed of two sequential steps, AdoMet formation and the subsequent tripolyphosphate hydrolysis which occurs prior to release of AdoMet from the enzyme. The sequence is that of S-adenosylmethionine synthase from Salmonella heidelberg (strain SL476).